The chain runs to 544 residues: MLQTQLQLQLQGVSIFHQLGLLIGLSLILSITWTAYTILSPYLRVKGKRIFNDRGRSELLWTGARKRFQAGARDLFKSAFAQNPDAFYIMTDTDVELILNSKYAAEVRNDKRFDIGKYNEDMFHGTIAGFEMFEDDHVLERVFVETVRNKLTRAIGKFVEPMSQEAADGLQKQWTDNTEWHALPLHQSILRTISQQSSRVFQGFPLCRNPDWLRITVNHTVTFFEAAESLKVWPHPLRPLAAKFLPLCRKLRAEAEEARGIIAPVLKERRARRTQQVEQSIEKNTKNEKKEDEDEDQNEDEETPGDMIEWAEQTANGAIYDPALLQMKVSLASIHTTSDLVSQAIFNLCSRPELVDDLRKEVISVIGQQGWVKTAIYQLKLMDSVLKETQRLKPISIGTMVRTTTSPVTFTDGLQVPPNTRTLVSCHNMWTDAVHANAAEFDGYRFLKLRQKPGQENWTQLVSTSNNHLGFGHGMHACPGRFFAATTAKVLLAHVVLKYDLKLLDDQKPDIIEHGAAQYANVWCGIGVRRRKEEIDLACPMATV.

The chain crosses the membrane as a helical span at residues 19–39 (LGLLIGLSLILSITWTAYTIL). The interval 273–305 (RTQQVEQSIEKNTKNEKKEDEDEDQNEDEETPG) is disordered. A compositionally biased stretch (basic and acidic residues) spans 280–290 (SIEKNTKNEKK). Acidic residues predominate over residues 291 to 304 (EDEDEDQNEDEETP). A heme-binding site is contributed by cysteine 478.

The protein belongs to the cytochrome P450 family. Requires heme as cofactor.

It localises to the membrane. It functions in the pathway secondary metabolite biosynthesis; terpenoid biosynthesis. Functionally, cytochrome P450 monooxygenase; part of the cluster A that mediates the biosynthesis of chevalone E and its oxidized derivatives that possess a unique five-membered lactone ring and can synergistically enhance the cytotoxicity of doxorubicin (DOX) in breast cancer cells. Within the pathway, cle2 is involved in hydroxylation of the chavalone E scaffold at position C-20 and contributes with cle4 to the production of seven oxidation derivatives. The molecular scaffold is commonly biosynthesized by a series of enzymes including the non-reducing polyketide synthase (NR-PKS) cle1 that produces the alpha-pyrone triacetic acid lactone (TAL); The membrane-bound prenyltransferase cle5 that accepts TAL as its substrate to perform a C-3 geranylgeranylation reaction, in which the pathway-dedicated GGPS cle6 is required to provide GGPP, the other substrate of cle5; the FAD-dependent monooxygenase Cle3 that forms an (S)-epoxide ring at the terminal olefin of the geranylgeranyl group; and the terpene cyclase Cle7 that catalyzes the cyclization of the prenyl group that yields the pentacyclic pathway intermediate chevalone E. Chevalone E can derivatize into seven new oxidized analogs by the cytochrome P450 monooxygenases cle2 (acting at C-20) and cle4 (acting at C-11 and C-12). This chain is Cytochrome P450 monooxygenase cle2, found in Aspergillus versicolor.